A 346-amino-acid polypeptide reads, in one-letter code: UPF0053 protein sll1254 (346 aa).

4 consecutive transmembrane segments (helical) span residues 1-21 (MLEI…CSCA), 58-78 (IGTI…TIGA), 87-107 (AWMG…GEII), and 121-141 (LLIA…VWLI). One can recognise a CNNM transmembrane domain in the interval 1 to 179 (MLEIVAAIFI…YKEGVIEGDE (179 aa)). 2 consecutive CBS domains span residues 198 to 259 (MTPR…GYKT) and 263 to 320 (LARP…IVDE).

Belongs to the UPF0053 family.

Its subcellular location is the cell membrane. In Synechocystis sp. (strain ATCC 27184 / PCC 6803 / Kazusa), this protein is UPF0053 protein sll1254.